The following is an 89-amino-acid chain: Acylphosphatase (89 aa).

An Acylphosphatase-like domain is found at 4-89 (SRRFLVSGTV…EQPPEGFRVL (86 aa)). Catalysis depends on residues Arg19 and Asn37.

This sequence belongs to the acylphosphatase family.

The enzyme catalyses an acyl phosphate + H2O = a carboxylate + phosphate + H(+). This is Acylphosphatase (acyP) from Alkalilimnicola ehrlichii (strain ATCC BAA-1101 / DSM 17681 / MLHE-1).